Here is a 453-residue protein sequence, read N- to C-terminus: Serine incorporator 1 (453 aa).

The N-myristoyl glycine moiety is linked to residue Gly2. Residues 2 to 39 (GSVLGLCSMASWIPCLCGSAPCLLCRCCPSGNNSTVTR) are Cytoplasmic-facing. A helical transmembrane segment spans residues 40–60 (LIYALFLLVGVCVACVMLIPG). Over 61–88 (MEEQLNKIPGFCENEKGVVPCNILVGYK) the chain is Lumenal. Residues 89-109 (AVYRLCFGLAMFYLLLSLLMI) form a helical membrane-spanning segment. At 110–123 (KVKSSSDPRAAVHN) the chain is on the cytoplasmic side. A helical transmembrane segment spans residues 124 to 144 (GFWFFKFAAAIAIIIGAFFIP). Over 145–151 (EGTFTTV) the chain is Lumenal. A helical transmembrane segment spans residues 152–172 (WFYVGMAGAFCFILIQLVLLI). Residues 173-197 (DFAHSWNESWVEKMEEGNSRCWYAA) lie on the Cytoplasmic side of the membrane. The helical transmembrane segment at 198–218 (LLSATALNYLLSLVAIVLFFV) threads the bilayer. Over 219-231 (YYTHPASCSENKA) the chain is Lumenal. The chain crosses the membrane as a helical span at residues 232 to 252 (FISVNMLLCIGASVMSILPKI). Residues 253 to 259 (QESQPRS) are Cytoplasmic-facing. Residues 260–280 (GLLQSSVITVYTMYLTWSAMT) traverse the membrane as a helical segment. Residues 281–309 (NEPETNCNPSLLSIIGYNTTSTVPKEGQS) are Lumenal-facing. Residues 310 to 330 (VQWWHAQGIIGLILFLLCVFY) form a helical membrane-spanning segment. At 331 to 387 (SSIRTSNNSQVNKLTLTSDESTLIEDGGARSDGSLEDGDDVHRAVDNERDGVTYSYS) the chain is on the cytoplasmic side. The residue at position 351 (Ser351) is a Phosphoserine. Residue Thr352 is modified to Phosphothreonine. 2 positions are modified to phosphoserine: Ser361 and Ser364. A helical membrane pass occupies residues 388-408 (FFHFMLFLASLYIMMTLTNWY). Residues 409 to 426 (RYEPSREMKSQWTAVWVK) lie on the Lumenal side of the membrane. Residues 427–447 (ISSSWIGIVLYVWTLVAPLVL) traverse the membrane as a helical segment. Residues 448–453 (TNRDFD) lie on the Cytoplasmic side of the membrane.

It belongs to the TDE1 family. Interacts with SPTLC1.

It localises to the endoplasmic reticulum membrane. Functionally, enhances the incorporation of serine into phosphatidylserine and sphingolipids. This is Serine incorporator 1 (SERINC1) from Pongo abelii (Sumatran orangutan).